The sequence spans 345 residues: Heat-inducible transcription repressor HrcA (345 aa).

Belongs to the HrcA family.

Its function is as follows. Negative regulator of class I heat shock genes (grpE-dnaK-dnaJ and groELS operons). Prevents heat-shock induction of these operons. The chain is Heat-inducible transcription repressor HrcA from Zymomonas mobilis subsp. mobilis (strain ATCC 31821 / ZM4 / CP4).